Consider the following 226-residue polypeptide: UPF0758 protein PSEEN5431 (226 aa).

The MPN domain occupies 102-224 (VMDNPLAVRR…PLSMIEHGWL (123 aa)). 3 residues coordinate Zn(2+): H173, H175, and D186. The short motif at 173–186 (HNHPSGNCEPSQDD) is the JAMM motif element.

Belongs to the UPF0758 family.

The protein is UPF0758 protein PSEEN5431 of Pseudomonas entomophila (strain L48).